A 682-amino-acid chain; its full sequence is Potassium-transporting ATPase ATP-binding subunit (682 aa).

4 helical membrane passes run 44-64, 66-86, 233-253, and 257-277; these read VMAV…SGHG, AGFG…GNFA, LTFL…GVTL, and LLIA…LPAI. D310 functions as the 4-aspartylphosphate intermediate in the catalytic mechanism. Residues D347, E351, 377–384, and K395 contribute to the ATP site; that span reads FTAQTRMS. Positions 518 and 522 each coordinate Mg(2+). 3 helical membrane passes run 588 to 608, 616 to 636, and 658 to 678; these read FAIL…LNVM, AVLA…PLAL, and GLGG…ALVA.

It belongs to the cation transport ATPase (P-type) (TC 3.A.3) family. Type IA subfamily. The system is composed of three essential subunits: KdpA, KdpB and KdpC.

It is found in the cell inner membrane. The enzyme catalyses K(+)(out) + ATP + H2O = K(+)(in) + ADP + phosphate + H(+). Its function is as follows. Part of the high-affinity ATP-driven potassium transport (or Kdp) system, which catalyzes the hydrolysis of ATP coupled with the electrogenic transport of potassium into the cytoplasm. This subunit is responsible for energy coupling to the transport system and for the release of the potassium ions to the cytoplasm. The sequence is that of Potassium-transporting ATPase ATP-binding subunit from Xanthomonas campestris pv. campestris (strain ATCC 33913 / DSM 3586 / NCPPB 528 / LMG 568 / P 25).